Here is a 111-residue protein sequence, read N- to C-terminus: uncharacterized protein (111 aa).

This is an uncharacterized protein from Escherichia coli (Bacteriophage T4).